Here is a 343-residue protein sequence, read N- to C-terminus: Sorbitol dehydrogenase (343 aa).

Residues 1-26 are disordered; sequence MKALVKTQHGTGHFAVQEKPEPTPGK. 3 residues coordinate Zn(2+): Cys-39, His-60, and Glu-61. Substrate is bound at residue Glu-146. Residues Ile-174, Arg-200, and 262–264 each bind NAD(+); that span reads VGL.

It belongs to the zinc-containing alcohol dehydrogenase family. Homotetramer. Zn(2+) serves as cofactor.

It catalyses the reaction keto-D-fructose + NADH + H(+) = D-sorbitol + NAD(+). The catalysed reaction is xylitol + NAD(+) = D-xylulose + NADH + H(+). The enzyme catalyses L-iditol + NAD(+) = keto-L-sorbose + NADH + H(+). Its function is as follows. Polyol dehydrogenase that catalyzes the NAD(+)-dependent oxidation of various sugar alcohols. Is active with D-sorbitol (D-glucitol), xylitol and L-iditol as substrates, leading to the C2-oxidized products D-fructose, D-xylulose and L-sorbose, respectively. The chain is Sorbitol dehydrogenase (gutB) from Halalkalibacterium halodurans (strain ATCC BAA-125 / DSM 18197 / FERM 7344 / JCM 9153 / C-125) (Bacillus halodurans).